We begin with the raw amino-acid sequence, 178 residues long: Large ribosomal subunit protein uL6 (178 aa).

This sequence belongs to the universal ribosomal protein uL6 family. Part of the 50S ribosomal subunit.

This protein binds to the 23S rRNA, and is important in its secondary structure. It is located near the subunit interface in the base of the L7/L12 stalk, and near the tRNA binding site of the peptidyltransferase center. In Streptococcus pneumoniae (strain 70585), this protein is Large ribosomal subunit protein uL6.